Consider the following 155-residue polypeptide: Ribosomal RNA large subunit methyltransferase H (155 aa).

S-adenosyl-L-methionine is bound by residues L72, G103, and 122 to 127 (LSPLTL).

This sequence belongs to the RNA methyltransferase RlmH family. Homodimer.

Its subcellular location is the cytoplasm. It catalyses the reaction pseudouridine(1915) in 23S rRNA + S-adenosyl-L-methionine = N(3)-methylpseudouridine(1915) in 23S rRNA + S-adenosyl-L-homocysteine + H(+). Specifically methylates the pseudouridine at position 1915 (m3Psi1915) in 23S rRNA. This chain is Ribosomal RNA large subunit methyltransferase H, found in Haemophilus ducreyi (strain 35000HP / ATCC 700724).